A 467-amino-acid chain; its full sequence is MSQVRLRFAPSPTGYLHVGGARTALFNWLLARKQQGKFILRIEDTDVARSTQESVDAILEGMTWLGLDWDEGPFYQSDNFPLYKEYVEKLIAAGKAYKCYCSAEELEVKREKALKEGGKPKYDGTCRNLPQGADDGRPYVVRFKAPQEGTTYWNDLIKGKISFENAELDDLIIQRTDGTPTYNFVVVIDDATMGVTTVIRGDDHVNNTPRQILLYEALEVPVPQFAHVPMILGADKARLSKRHGATSVMAYRDMGFLPEAMVNYLVRLGWSYGDEEIFSLEDLVQKFSIENVGRSAGVFNPDKLLWLNAHYIKNGDPVRLAGLLIPFLKERGVTDTAGGPELPAVVKTLQERAKTMLELADGALFYYQQELSYDEKGVAKFFNPETPALLRGLFKKLGAVGELTTVAIEGVFKELCEEKGIKLGQVGPAVRLALSGSTASPGIYEMIEVLGLEETGKRLERAIAKLC.

The 'HIGH' region motif lies at 10 to 20; the sequence is PSPTGYLHVGG. The short motif at 238-242 is the 'KMSKS' region element; sequence RLSKR. An ATP-binding site is contributed by K241.

This sequence belongs to the class-I aminoacyl-tRNA synthetase family. Glutamate--tRNA ligase type 1 subfamily. As to quaternary structure, monomer.

The protein resides in the cytoplasm. It catalyses the reaction tRNA(Glu) + L-glutamate + ATP = L-glutamyl-tRNA(Glu) + AMP + diphosphate. In terms of biological role, catalyzes the attachment of glutamate to tRNA(Glu) in a two-step reaction: glutamate is first activated by ATP to form Glu-AMP and then transferred to the acceptor end of tRNA(Glu). The chain is Glutamate--tRNA ligase from Citrifermentans bemidjiense (strain ATCC BAA-1014 / DSM 16622 / JCM 12645 / Bem) (Geobacter bemidjiensis).